The primary structure comprises 360 residues: Heme A synthase (360 aa).

The next 9 helical transmembrane spans lie at 29 to 49 (WLFA…ATRL), 111 to 131 (FLGR…WWTG), 139 to 159 (LGLL…WIMV), 175 to 195 (LAAH…LAAG), 210 to 230 (LTAL…GLVA), 242 to 262 (PLMD…TPWI), 269 to 289 (VALV…VAAL), 309 to 329 (AILG…LLAV), and 330 to 350 (PLWA…MAAV). H276 lines the heme pocket. H337 lines the heme pocket.

It belongs to the COX15/CtaA family. Type 2 subfamily. Interacts with CtaB. It depends on heme b as a cofactor.

It is found in the cell membrane. It catalyses the reaction Fe(II)-heme o + 2 A + H2O = Fe(II)-heme a + 2 AH2. It functions in the pathway porphyrin-containing compound metabolism; heme A biosynthesis; heme A from heme O: step 1/1. Its function is as follows. Catalyzes the conversion of heme O to heme A by two successive hydroxylations of the methyl group at C8. The first hydroxylation forms heme I, the second hydroxylation results in an unstable dihydroxymethyl group, which spontaneously dehydrates, resulting in the formyl group of heme A. The chain is Heme A synthase from Methylobacterium nodulans (strain LMG 21967 / CNCM I-2342 / ORS 2060).